The primary structure comprises 216 residues: Thymidylate kinase (216 aa).

Residue 10 to 17 (GPDGAGKS) coordinates ATP.

This sequence belongs to the thymidylate kinase family.

The catalysed reaction is dTMP + ATP = dTDP + ADP. Its function is as follows. Phosphorylation of dTMP to form dTDP in both de novo and salvage pathways of dTTP synthesis. In Lactobacillus acidophilus (strain ATCC 700396 / NCK56 / N2 / NCFM), this protein is Thymidylate kinase.